A 559-amino-acid chain; its full sequence is Leucine-rich repeat protein soc-2 (559 aa).

Basic and acidic residues predominate over residues 1–17 (METSKEFEFRPAKETSR). Positions 1-55 (METSKEFEFRPAKETSRSKSPGGIVGRLSNFARNKARHSLSEKGSNSVGGSGGSG) are disordered. LRR repeat units follow at residues 74 to 95 (QDQR…IKEL), 97 to 118 (QLTE…IGQL), 120 to 141 (NLKK…LSSL), 143 to 164 (SLET…IYKI), 166 to 187 (SLET…IGNL), 189 to 210 (KLKM…IGKL), 212 to 233 (SLVV…IGEC), 235 to 257 (ALTQ…GKLT), 258 to 279 (NLVR…LESC), 281 to 302 (QLEE…LLTM), 305 to 326 (KIHT…GPQQ), 329 to 350 (PTVT…IFSK), 353 to 374 (RLTK…MGSW), 376 to 397 (SITE…IEKL), 399 to 420 (NLEI…IGNL), 422 to 443 (KLRE…IGFL), 445 to 466 (HLTK…IGNL), 468 to 489 (SLQD…IGHL), 491 to 513 (SLKS…LALC), and 515 to 536 (SLEI…ITAG).

This sequence belongs to the SHOC2 family. Interacts with let-60.

In terms of biological role, acts as a Ras effector and participates in MAPK pathway activation. Probably acts as a scaffolding protein in a protein phosphatase complex that specifically dephosphorylates Raf kinase and stimulates Raf activity at specialized signaling complexes upon Ras activation. Required for vulval development. Involved in fluid homeostasis. Plays a role in nicotinic acetylcholine receptor (nAChR)-mediated sensitivity to nicotine. This chain is Leucine-rich repeat protein soc-2 (soc-2), found in Caenorhabditis briggsae.